The chain runs to 341 residues: Glycerol-3-phosphate dehydrogenase [NAD(P)+] (341 aa).

4 residues coordinate NADPH: Ser-11, Trp-12, Arg-33, and Lys-106. Sn-glycerol 3-phosphate-binding residues include Lys-106, Gly-137, and Ser-139. Residue Ala-141 participates in NADPH binding. Positions 192, 245, 255, 256, and 257 each coordinate sn-glycerol 3-phosphate. The Proton acceptor role is filled by Lys-192. Arg-256 lines the NADPH pocket. NADPH is bound by residues Val-280 and Glu-282.

This sequence belongs to the NAD-dependent glycerol-3-phosphate dehydrogenase family.

It is found in the cytoplasm. The enzyme catalyses sn-glycerol 3-phosphate + NAD(+) = dihydroxyacetone phosphate + NADH + H(+). It carries out the reaction sn-glycerol 3-phosphate + NADP(+) = dihydroxyacetone phosphate + NADPH + H(+). It functions in the pathway membrane lipid metabolism; glycerophospholipid metabolism. Its function is as follows. Catalyzes the reduction of the glycolytic intermediate dihydroxyacetone phosphate (DHAP) to sn-glycerol 3-phosphate (G3P), the key precursor for phospholipid synthesis. The polypeptide is Glycerol-3-phosphate dehydrogenase [NAD(P)+] (Bacillus cytotoxicus (strain DSM 22905 / CIP 110041 / 391-98 / NVH 391-98)).